The sequence spans 173 residues: NADH-ubiquinone oxidoreductase chain 6 (173 aa).

The next 5 helical transmembrane spans lie at 1–21 (MVYFMFIMLVGLILGLMAVAS), 25–45 (PYFAALGLVVAAGVGCGLLVG), 53–73 (LVLFLIYLGGMLVVFAYTAAL), 82–102 (WGDWSVLLYVSVYLLGIFFVG), and 141–161 (GIMLVLGGWVLLLTLFVILEL).

Belongs to the complex I subunit 6 family.

The protein localises to the mitochondrion membrane. The catalysed reaction is a ubiquinone + NADH + 5 H(+)(in) = a ubiquinol + NAD(+) + 4 H(+)(out). Functionally, core subunit of the mitochondrial membrane respiratory chain NADH dehydrogenase (Complex I) that is believed to belong to the minimal assembly required for catalysis. Complex I functions in the transfer of electrons from NADH to the respiratory chain. The immediate electron acceptor for the enzyme is believed to be ubiquinone. The sequence is that of NADH-ubiquinone oxidoreductase chain 6 (MT-ND6) from Squalus acanthias (Spiny dogfish).